The following is a 237-amino-acid chain: MNIKDIGVIIAKKPLKENTFIITVFTKNHGLYSGVVKEFSKKSKFIYQEGNIIDFLWQARLHEHIGMAKCELIKSYTGYFITNKAKLYAFNSVISLIKELFHEREEHSKFFSFLINYLDNLSKNFCFRDYINFELALLAETGYKLDLTKCGVSHVTTDLIYVSPKSARALSYEVGKPYKDKLLMLPRFLLSDNSEITLEEKRQALALTNYFFNRYLFHNNRQVEARQTFIEYTLNNF.

Belongs to the RecO family.

Its function is as follows. Involved in DNA repair and RecF pathway recombination. This is DNA repair protein RecO from Rickettsia conorii (strain ATCC VR-613 / Malish 7).